Reading from the N-terminus, the 476-residue chain is Angiotensinogen (476 aa).

The N-terminal stretch at 1-24 (MAPAGLSLGAAILCLLAWAGLAAG) is a signal peptide. The cysteines at positions 42 and 161 are disulfide-linked. N-linked (GlcNAc...) asparagine glycosylation is found at Asn-295, Asn-319, Asn-362, and Asn-401.

This sequence belongs to the serpin family. In response to low blood pressure, the enzyme renin/REN cleaves angiotensinogen to produce angiotensin-1. Angiotensin-1 is a substrate of ACE (angiotensin converting enzyme) that removes a dipeptide to yield the physiologically active peptide angiotensin-2. Angiotensin-1 and angiotensin-2 can be further processed to generate angiotensin-3, angiotensin-4. Angiotensin 1-9 is cleaved from angiotensin-1 by ACE2 and can be further processed by ACE to produce angiotensin 1-7, angiotensin 1-5 and angiotensin 1-4. Angiotensin 1-7 has also been proposed to be cleaved from angiotensin-2 by ACE2 or from angiotensin-1 by MME (neprilysin). In terms of processing, the disulfide bond is labile. Angiotensinogen is present in the circulation in a near 40:60 ratio with the oxidized disulfide-bonded form, which preferentially interacts with receptor-bound renin.

The protein resides in the secreted. Its function is as follows. Essential component of the renin-angiotensin system (RAS), a potent regulator of blood pressure, body fluid and electrolyte homeostasis. In terms of biological role, acts directly on vascular smooth muscle as a potent vasoconstrictor, affects cardiac contractility and heart rate through its action on the sympathetic nervous system, and alters renal sodium and water absorption through its ability to stimulate the zona glomerulosa cells of the adrenal cortex to synthesize and secrete aldosterone. Acts by binding to angiotensin receptors AGTR1 and AGTR2. Also binds the DEAR/FBXW7-AS1 receptor. Functionally, stimulates aldosterone release. Is a ligand for the G-protein coupled receptor MAS1. Has vasodilator and antidiuretic effects. Has an antithrombotic effect that involves MAS1-mediated release of nitric oxide from platelets. In Bos taurus (Bovine), this protein is Angiotensinogen (AGT).